The following is a 275-amino-acid chain: L-aspartate dehydrogenase (275 aa).

Positions 130 and 196 each coordinate NAD(+). His-226 is an active-site residue.

The protein belongs to the L-aspartate dehydrogenase family.

The enzyme catalyses L-aspartate + NADP(+) + H2O = oxaloacetate + NH4(+) + NADPH + H(+). It catalyses the reaction L-aspartate + NAD(+) + H2O = oxaloacetate + NH4(+) + NADH + H(+). It participates in cofactor biosynthesis; NAD(+) biosynthesis; iminoaspartate from L-aspartate (dehydrogenase route): step 1/1. Its function is as follows. Specifically catalyzes the NAD or NADP-dependent dehydrogenation of L-aspartate to iminoaspartate. This Ruegeria pomeroyi (strain ATCC 700808 / DSM 15171 / DSS-3) (Silicibacter pomeroyi) protein is L-aspartate dehydrogenase.